Here is an 850-residue protein sequence, read N- to C-terminus: cAMP-inducible prespore protein D7 (850 aa).

The N-terminal stretch at 1–24 (MYSKKYTSFVIVLILSCIISTCTS) is a signal peptide. Positions 119–130 (QNNNIGSSIGDS) are enriched in low complexity. 2 disordered regions span residues 119-167 (QNNN…SKTT) and 787-850 (DAEL…QNQK). Over residues 131–143 (TGASTSPQFQSIN) the composition is skewed to polar residues. The segment covering 144–154 (GLSGASQSSGS) has biased composition (low complexity). Residues 787-798 (DAELAKNNKQEN) show a composition bias toward basic and acidic residues. Residues 801 to 820 (ENLVQEKQQSPDQIKNQLKN) show a composition bias toward polar residues. Over residues 837-850 (EKNQQLLEQEQNQK) the composition is skewed to low complexity.

This Dictyostelium discoideum (Social amoeba) protein is cAMP-inducible prespore protein D7 (D7).